The chain runs to 84 residues: uncharacterized protein (84 aa).

This is an uncharacterized protein from Schizosaccharomyces pombe (strain 972 / ATCC 24843) (Fission yeast).